The sequence spans 65 residues: Metallothionein-3 (65 aa).

Met-1 is modified (N-acetylmethionine). Residues 1-30 (MDPEACPCPTGGSCTCSDSCKCEGCTCASS) form a beta region. A divalent metal cation contacts are provided by Cys-6, Cys-8, Cys-14, Cys-16, Cys-20, Cys-22, Cys-25, and Cys-27. The segment at 31–65 (KKSCCPAECEKCAKDCVCKGGEGAEAEEKKCGCCQ) is alpha. Ser-33 is modified (phosphoserine). Positions 34, 35, 39, 42, 46, 48, 61, 63, and 64 each coordinate a divalent metal cation.

This sequence belongs to the metallothionein superfamily. Type 1 family.

Its function is as follows. Binds heavy metals. Contains five zinc and one copper atoms per polypeptide chain and only a negligible amount of cadmium. This Ovis aries (Sheep) protein is Metallothionein-3 (MT3).